Consider the following 871-residue polypeptide: Transient receptor potential cation channel subfamily V member 4 (871 aa).

2 disordered regions span residues 1 to 68 (MADP…PNLR) and 110 to 143 (YGTY…PQPP). The Cytoplasmic segment spans residues 1 to 469 (MADPGDGPRA…RDKWRKFGAV (469 aa)). The residue at position 110 (Tyr110) is a Phosphotyrosine. The segment covering 116–129 (HPSDNKRWRRKVVE) has biased composition (basic and acidic residues). ATP is bound by residues Lys192, Lys197, Asn201, 236–239 (YRGQ), and Arg248. ANK repeat units follow at residues 237 to 266 (RGQT…DVHA) and 284 to 313 (FGEL…KKAD). 249 to 251 (RCK) lines the a 1,2-diacyl-sn-glycero-3-phospho-(1D-myo-inositol-4,5-bisphosphate) pocket. Tyr253 is modified (phosphotyrosine). Residues 296–299 (NQPH) and Lys344 contribute to the a 1,2-diacyl-sn-glycero-3-phospho-(1D-myo-inositol-4,5-bisphosphate) site. Residues 369-398 (DGLSPLMMAAKTGKIGVFQHIIRREVTDED) form an ANK 3 repeat. The chain crosses the membrane as a helical span at residues 470 to 490 (SFYINVVSYLCAMVIFTLTAY). Over 491–507 (YQPLEGTPPYPYRTTVD) the chain is Extracellular. Residues 508-534 (YLRLAGEVITLLTGVLFFFTSIKDLFM) form a helical membrane-spanning segment. The Cytoplasmic portion of the chain corresponds to 535–547 (KKCPGVNSLFVDG). A helical membrane pass occupies residues 548-568 (SFQLLYFIYSVLVVVSAALYL). Residues 569–572 (AGIE) are Extracellular-facing. The chain crosses the membrane as a helical span at residues 573–593 (AYLAVMVFALVLGWMNALYFT). Residues 594–608 (RGLKLTGTYSIMIQK) are Cytoplasmic-facing. A helical transmembrane segment spans residues 609 to 636 (ILFKDLFRFLLVYLLFMIGYASALVTLL). The Extracellular segment spans residues 637-665 (NPCTNMKVCNEDQSNCTVPSYPACRDSET). Positions 666–685 (FSAFLLDLFKLTIGMGDLEM) form an intramembrane region, pore-forming. Positions 679–682 (GMGD) match the Selectivity filter motif. Asp682 contributes to the Ca(2+) binding site. Over 686–693 (LSSAKYPV) the chain is Extracellular. A helical transmembrane segment spans residues 694–722 (VFILLLVTYIILTFVLLLNMLIALMGETV). The Cytoplasmic portion of the chain corresponds to 723-871 (GQVSKESKHI…PKWRAEDAPL (149 aa)). Phosphotyrosine is present on Tyr805. The tract at residues 812-831 (HTMGRLRRDRWSSVVPRVVE) is interaction with calmodulin and ITPR3. Residue Ser824 is modified to Phosphoserine.

Belongs to the transient receptor (TC 1.A.4) family. TrpV subfamily. TRPV4 sub-subfamily. In terms of assembly, homotetramer. Interacts with calmodulin. Interacts with MAP7 and Src family Tyr protein kinases LYN, SRC, FYN, HCK, LCK and YES. Interacts with CTNNB1. The TRPV4 and CTNNB1 complex can interact with CDH1. Part of a complex containing MLC1, AQP4, HEPACAM and ATP1B1. Interacts with PACSIN1, PACSIN2 and PACSIN3 (via SH3 domain). Interacts with ITPR3. Interacts with AQP5; the interaction is probably indirect and regulates TRPV4 activation by hypotonicity. Interacts with ANO1. Interacts (via C-terminus) with PKD2 (via C-terminus). Interacts with DDX3X; this interaction is decreased when the channel is activated. N-glycosylated. In terms of tissue distribution, expressed lung, spleen, kidney, testis, fat, and at very low levels in trigeminal ganglia.

It localises to the cell membrane. The protein localises to the apical cell membrane. It is found in the cell junction. The protein resides in the adherens junction. Its subcellular location is the cell projection. It localises to the cilium. The enzyme catalyses Ca(2+)(in) = Ca(2+)(out). Non-selective calcium permeant cation channel involved in osmotic sensitivity and mechanosensitivity. Activation by exposure to hypotonicity within the physiological range exhibits an outward rectification. Also activated by heat, low pH, citrate and phorbol esters. Increase of intracellular Ca(2+) potentiates currents. Channel activity seems to be regulated by a calmodulin-dependent mechanism with a negative feedback mechanism. Acts as a regulator of intracellular Ca(2+) in synoviocytes. Plays an obligatory role as a molecular component in the nonselective cation channel activation induced by 4-alpha-phorbol 12,13-didecanoate and hypotonic stimulation in synoviocytes and also regulates production of IL-8. Together with PKD2, forms mechano- and thermosensitive channels in cilium. Promotes cell-cell junction formation in skin keratinocytes and plays an important role in the formation and/or maintenance of functional intercellular barriers. Negatively regulates expression of PPARGC1A, UCP1, oxidative metabolism and respiration in adipocytes. Regulates expression of chemokines and cytokines related to pro-inflammatory pathway in adipocytes. Together with AQP5, controls regulatory volume decrease in salivary epithelial cells. Required for normal development and maintenance of bone and cartilage. In its inactive state, may sequester DDX3X at the plasma membrane. When activated, the interaction between both proteins is affected and DDX3X relocalizes to the nucleus. In neurons of the central nervous system, could play a role in triggering voluntary water intake in response to increased sodium concentration in body fluid. The protein is Transient receptor potential cation channel subfamily V member 4 (Trpv4) of Rattus norvegicus (Rat).